The chain runs to 1047 residues: Probable phospholipid-transporting ATPase IIA (1047 aa).

N-acetylthreonine is present on T2. Over 2–69 (TDNIPLQPVR…NQKYNFFTFL (68 aa)) the chain is Cytoplasmic. The chain crosses the membrane as a helical span at residues 70–91 (PGVLFNQFKYFFNLYFLLLACS). Over 92–96 (QFVPE) the chain is Extracellular. Residues 97-119 (MRLGALYTYWVPLGFVLAVTVIR) form a helical membrane-spanning segment. At 120 to 303 (EAVEEIRCYV…GLFDLEVNCL (184 aa)) the chain is on the cytoplasmic side. A helical transmembrane segment spans residues 304 to 325 (TKILFGALVVVSLVMVALQHFA). Topologically, residues 326–332 (GRWYLQI) are extracellular. Residues 333–354 (IRFLLLFSNIIPISLRVNLDMG) form a helical membrane-spanning segment. The Cytoplasmic segment spans residues 355 to 841 (KIVYSWVIRR…GRNSYKRSAA (487 aa)). D391 functions as the 4-aspartylphosphate intermediate in the catalytic mechanism. ATP contacts are provided by D391, K392, T393, E502, F544, K549, K568, R597, T677, G678, D679, R759, and K765. D391 contacts Mg(2+). Residue T393 coordinates Mg(2+). D785 contributes to the Mg(2+) binding site. Positions 788 and 789 each coordinate ATP. D789 serves as a coordination point for Mg(2+). The chain crosses the membrane as a helical span at residues 842-862 (LSQFVIHRSLCISTMQAVFSS). Over 863-874 (VFYFASVPLYQG) the chain is Extracellular. The chain crosses the membrane as a helical span at residues 875 to 893 (FLIIGYSTIYTMFPVFSLV). Over 894-923 (LDKDVKSEVAMLYPELYKDLLKGRPLSYKT) the chain is Cytoplasmic. Residues 924–942 (FLIWVLISIYQGSTIMYGA) form a helical membrane-spanning segment. The Extracellular portion of the chain corresponds to 943–949 (LLLFESE). A helical membrane pass occupies residues 950–972 (FVHIVAISFTSLILTELLMVALT). Topologically, residues 973 to 978 (IQTWHW) are cytoplasmic. Residues 979–999 (LMTVAELLSLACYIASLVFLH) form a helical membrane-spanning segment. The Extracellular segment spans residues 1000–1006 (EFIDVYF). The chain crosses the membrane as a helical span at residues 1007–1030 (IATLSFLWKVSVITLVSCLPLYVL). The Cytoplasmic portion of the chain corresponds to 1031–1047 (KYLRRRFSPPSYSKLTS).

Belongs to the cation transport ATPase (P-type) (TC 3.A.3) family. Type IV subfamily. In terms of assembly, heterotrimer with MON2 and DOP1B; this complex regulates SNX3-retromer mediated endosomal sorting of WLS. Interacts with RAB5A and RAB11A. The cofactor is Mg(2+).

It localises to the early endosome membrane. The protein localises to the recycling endosome membrane. It is found in the late endosome membrane. The protein resides in the golgi apparatus. Its subcellular location is the trans-Golgi network membrane. It localises to the cell membrane. It carries out the reaction ATP + H2O + phospholipidSide 1 = ADP + phosphate + phospholipidSide 2.. Plays a role in regulating membrane trafficking of cargo proteins, namely endosome to plasma membrane recycling, probably acting through RAB5 and RAB11 activation. Also involved in endosome to trans-Golgi network retrograde transport. In complex with MON2 and DOP1B, regulates SNX3 retromer-mediated endosomal sorting of WLS, a transporter of Wnt morphogens in developing tissues. Participates in the formation of endosomal carriers that direct WLS trafficking back to Golgi, away from lysosomal degradation. Appears to be implicated in intercellular communication by negatively regulating the release of exosomes. The flippase activity towards membrane lipids and its role in membrane asymmetry remains to be proved. Required for the maintenance of neurite morphology and synaptic transmission. The sequence is that of Probable phospholipid-transporting ATPase IIA from Homo sapiens (Human).